We begin with the raw amino-acid sequence, 168 residues long: Quinol oxidase subunit 2 (168 aa).

Residues 9–31 (EVWFIVMLVLVLIFFSWNVYYLS) traverse the membrane as a helical segment.

The protein belongs to the cytochrome c oxidase subunit 2 family.

Its subcellular location is the cell membrane. It catalyses the reaction 2 a quinol + O2 = 2 a quinone + 2 H2O. Its function is as follows. The terminal oxidase is the component of the respiratory chain that catalyzes the reduction of oxygen to water. Subunits 1-3 form the functional core of the enzyme complex. Subunit 2 transfers the electrons from caldariella quinol to the bimetallic center of the catalytic subunit 1 that is formed by heme A3 and Cu(B). This chain is Quinol oxidase subunit 2 (soxA), found in Sulfolobus acidocaldarius (strain ATCC 33909 / DSM 639 / JCM 8929 / NBRC 15157 / NCIMB 11770).